We begin with the raw amino-acid sequence, 85 residues long: High affinity immunoglobulin epsilon receptor subunit gamma (85 aa).

An N-terminal signal peptide occupies residues 1–18; sequence MIPAVVLLLLLLVEQAAA. Residues 19-23 lie on the Extracellular side of the membrane; it reads LGEPQ. A helical transmembrane segment spans residues 24–44; the sequence is LCYILDAILFLYGIVLTLLYC. At 45-85 the chain is on the cytoplasmic side; it reads RLKLQVRKAATASEKSDGIYTGLSTRTQETYETLKHEKPPQ. An ITAM domain is found at 53–81; sequence AATASEKSDGIYTGLSTRTQETYETLKHE. Phosphotyrosine is present on Tyr64. Position 68 is a phosphoserine (Ser68). Tyr75 carries the post-translational modification Phosphotyrosine. Position 77 is a phosphothreonine (Thr77).

This sequence belongs to the CD3Z/FCER1G family. In terms of assembly, igE Fc receptor is a tetramer of an alpha chain, a beta chain, and two disulfide linked gamma chains. Associates with FCGR1A; forms a functional signaling complex. The signaling subunit of immunoglobulin gamma (IgG) Fc receptor complex. As a homodimer or a heterodimer of CD247 and FCER1G, associates with the ligand binding subunit FCGR3A to form a functional receptor complex. Associates with CLEC6A. Interacts with CLEC4E. Interacts (via ITAM domain) with SYK (via SH2 domains); activates SYK, enabling integrin-mediated activation of neutrophils and macrophages. Interacts with CSF2RB and recruits SYK in response to IL3 stimulation; this interaction is direct. Interacts with CD300LH; the interaction may be indirect. Interacts with CD300LD. Interacts with TARM1.

It is found in the cell membrane. Its function is as follows. Adapter protein containing an immunoreceptor tyrosine-based activation motif (ITAM) that transduces activation signals from various immunoreceptors. As a component of the high-affinity immunoglobulin E (IgE) receptor, mediates allergic inflammatory signaling in mast cells. As a constitutive component of interleukin-3 receptor complex, selectively mediates interleukin 4/IL4 production by basophils priming T-cells toward effector T-helper 2 subset. Associates with pattern recognition receptors CLEC4D and CLEC4E to form a functional signaling complex in myeloid cells. Binding of mycobacterial trehalose 6,6'-dimycolate (TDM) to this receptor complex leads to phosphorylation of ITAM, triggering activation of SYK, CARD9 and NF-kappa-B, consequently driving maturation of antigen-presenting cells and shaping antigen-specific priming of T-cells toward effector T-helper 1 and T-helper 17 cell subtypes. May function cooperatively with other activating receptors. Functionally linked to integrin beta-2/ITGB2-mediated neutrophil activation. Also involved in integrin alpha-2/ITGA2-mediated platelet activation. This Bos taurus (Bovine) protein is High affinity immunoglobulin epsilon receptor subunit gamma (FCER1G).